A 400-amino-acid polypeptide reads, in one-letter code: Enoyl-[acyl-carrier-protein] reductase [NADH] (400 aa).

Residues 48-53, 74-75, 111-112, and 139-140 contribute to the NAD(+) site; these read GSSSGY, FE, DA, and LA. Y225 provides a ligand contact to substrate. The active-site Proton donor is the Y235. NAD(+)-binding positions include K244 and 273 to 275; that span reads VVT.

This sequence belongs to the TER reductase family. In terms of assembly, monomer.

The catalysed reaction is a 2,3-saturated acyl-[ACP] + NAD(+) = a (2E)-enoyl-[ACP] + NADH + H(+). The protein operates within lipid metabolism; fatty acid biosynthesis. Its function is as follows. Involved in the final reduction of the elongation cycle of fatty acid synthesis (FAS II). Catalyzes the reduction of a carbon-carbon double bond in an enoyl moiety that is covalently linked to an acyl carrier protein (ACP). In Shewanella woodyi (strain ATCC 51908 / MS32), this protein is Enoyl-[acyl-carrier-protein] reductase [NADH].